The sequence spans 194 residues: Inosine triphosphate pyrophosphatase (194 aa).

Alanine 2 is subject to N-acetylalanine. Residue threonine 14–lysine 19 coordinates ITP. Glutamate 44 provides a ligand contact to Mg(2+). ITP contacts are provided by residues lysine 56, aspartate 72–threonine 73, lysine 89, phenylalanine 149–aspartate 152, lysine 172, and histidine 177–arginine 178.

It belongs to the HAM1 NTPase family. Homodimer. The cofactor is Mg(2+). In terms of tissue distribution, ubiquitous. Highly expressed in heart, liver, sex glands, thyroid and adrenal gland.

The protein resides in the cytoplasm. It catalyses the reaction ITP + H2O = IMP + diphosphate + H(+). The catalysed reaction is dITP + H2O = dIMP + diphosphate + H(+). The enzyme catalyses XTP + H2O = XMP + diphosphate + H(+). It carries out the reaction N(6)-hydroxy-dATP + H2O = N(6)-hydroxy-dAMP + diphosphate + H(+). Functionally, pyrophosphatase that hydrolyzes the non-canonical purine nucleotides inosine triphosphate (ITP), deoxyinosine triphosphate (dITP) as well as 2'-deoxy-N-6-hydroxylaminopurine triphosphate (dHAPTP) and xanthosine 5'-triphosphate (XTP) to their respective monophosphate derivatives. The enzyme does not distinguish between the deoxy- and ribose forms. Probably excludes non-canonical purines from RNA and DNA precursor pools, thus preventing their incorporation into RNA and DNA and avoiding chromosomal lesions. The sequence is that of Inosine triphosphate pyrophosphatase from Homo sapiens (Human).